The chain runs to 524 residues: Acetyl-CoA hydrolase (524 aa).

Residue 275–279 (GIGNI) coordinates CoA. The 5-glutamyl coenzyme A thioester intermediate role is filled by Glu-300. CoA is bound by residues Asn-390 and Gly-394.

The protein belongs to the acetyl-CoA hydrolase/transferase family.

Its subcellular location is the cytoplasm. It catalyses the reaction acetyl-CoA + H2O = acetate + CoA + H(+). Its function is as follows. Presumably involved in regulating the intracellular acetyl-CoA pool for fatty acid and cholesterol synthesis and fatty acid oxidation. This chain is Acetyl-CoA hydrolase (ACH1), found in Candida albicans (strain SC5314 / ATCC MYA-2876) (Yeast).